The following is a 424-amino-acid chain: UPF0229 protein PFL_5654 (424 aa).

Positions 85–108 (GEHIARPQGGGGGGGGRGKAGNSG) are disordered. Gly residues predominate over residues 92–108 (QGGGGGGGGRGKAGNSG).

This sequence belongs to the UPF0229 family.

This chain is UPF0229 protein PFL_5654, found in Pseudomonas fluorescens (strain ATCC BAA-477 / NRRL B-23932 / Pf-5).